Here is a 335-residue protein sequence, read N- to C-terminus: HTH-type transcriptional regulator LacR (335 aa).

An HTH lacI-type domain is found at 1–58; it reads MRTIKEIALESGYSPATVSRLLNNDPNLSITADTKNKILEIANKLGYWEDHQEKKIKP. The H-T-H motif DNA-binding region spans 4–23; it reads IKEIALESGYSPATVSRLLN.

It participates in carbohydrate metabolism; lactose degradation [regulation]. Its function is as follows. Negatively regulates the transcription of the lactose utilization genes lacL and lacM. The polypeptide is HTH-type transcriptional regulator LacR (lacR) (Lactobacillus helveticus (Lactobacillus suntoryeus)).